Consider the following 196-residue polypeptide: NADPH:quinone oxidoreductase (196 aa).

The protein belongs to the SsuE family. In terms of assembly, homotetramer. Requires FMN as cofactor.

The protein localises to the cell membrane. The catalysed reaction is a quinone + NADH + H(+) = a quinol + NAD(+). The enzyme catalyses a quinone + NADPH + H(+) = a quinol + NADP(+). Functionally, the enzyme apparently serves as a quinone reductase in connection with conjugation reactions of hydroquinones involved in detoxification pathways. This is NADPH:quinone oxidoreductase (NQR) from Arabidopsis thaliana (Mouse-ear cress).